Here is a 527-residue protein sequence, read N- to C-terminus: MEPTEKLCKKMQGQEAGDKPRTAALETEGPLQDSALPIQDDQDKQSSLPRASLGKRPLSKTSEELMDAGTCRVHKAPTAAACGPQSEEEGCSPPERKAESLKPSISAVPGQATAGSLNSHEGDLKKESLEVTCQFRKKTRTLYRSDQLEELERIFQEDHYPDSDKRHEISQMVGVTPQRIMVWFQNRRAKWRKVEKLNEKETKNGPAAPSADSSQHRSAPELLDPMPTDLEPGPVPPENILDVFPEPPMLLTSEQTLTPFQNNEGAERVAVTPPLLSPPPIRRANLPLPLGPVQTPQVLPPMRDVPGSDSIYKDKAYVSWGTSIASPPTYSNLEDLGSQDYQASSQLGSFQLSQAPHLPLFPSLQSQFPYLPPFPYPIPSSMPFLPPEDSLFSFPFGFSGDSSQDYCPGPPPGQILLQPPAENMGTGPWSGHCLPEPPFPRPHYPQALGQPLGAEGYFPNLLPTPYALTMSKQSSLGLNGLLEGTRVETGSSLSKMSDEQTSSSLEQPALEEVRDKNKNSHAAGAKE.

4 disordered regions span residues 1–126, 194–245, 271–306, and 488–527; these read MEPT…DLKK, VEKL…DVFP, VTPPLLSPPPIRRANLPLPLGPVQTPQVLPPMRDVP, and ETGSSLSKMSDEQTSSSLEQPALEEVRDKNKNSHAAGAKE. The segment at residues 136–195 is a DNA-binding region (homeobox); the sequence is RKKTRTLYRSDQLEELERIFQEDHYPDSDKRHEISQMVGVTPQRIMVWFQNRRAKWRKVE. Positions 194-203 are enriched in basic and acidic residues; it reads VEKLNEKETK. A compositionally biased stretch (polar residues) spans 488–506; that stretch reads ETGSSLSKMSDEQTSSSLE. Basic and acidic residues predominate over residues 511-527; it reads EEVRDKNKNSHAAGAKE.

Specifically expressed in ovaries and testes. In ovaries, expressed in oocytes from primordial through antral follicles but not in granulosa cells, theca cells and corpora lutea.

It is found in the nucleus. Functionally, transcription factor which plays an essential role in postnatal follicle development. Binds preferentially to the DNA sequences 5'-TAATTG-3', 5'-TAGTTG-3' and 5'-TAATTA-3'. Directly regulates the transcription of POU5F1 and GDF9 during early folliculogenesis. The chain is Homeobox protein NOBOX (Nobox) from Mus musculus (Mouse).